A 311-amino-acid chain; its full sequence is MAFLSNMAMFITMLMFSSMMHPCFSQPSCAPMDTMDTNGVDEADIDMMQFPINLEFLEAEFFLWGALGHGLDVVAPQLAMGGPPPYGAQKANLDPLTQNIITEFAYQEVGHLRALERTVGGFPRPLLNLSASNFANLIEAAFGYHLVPPFNPYRDGLSYMLASYAVPYMGLVGYVGTNPNLKGHQTKRLLAGLLGVESGQDAVIRMYLYERQGHVVAPYRHTVAEFTARISELRNRLAMCGVKDEGVIVPRQLGAENQTMSNVLSANYDSISYRRTPGEILRVVYSTGNESVPGGFYPNGGNGRIARRFLV.

An N-terminal signal peptide occupies residues 1–25 (MAFLSNMAMFITMLMFSSMMHPCFS). Residues N128, N257, and N289 are each glycosylated (N-linked (GlcNAc...) asparagine).

In terms of assembly, forms homomultimers. In terms of tissue distribution, observed in all flowers organs; mainly expressed in nectaries and, to a lower extent, in petals and ovules, as well as in stigmas and calyx at low levels.

It catalyses the reaction 2 H2O2 = O2 + 2 H2O. Its function is as follows. Involved in the production of blood-red nectar containing the alkaloid nesocodin and that serves as a visual attractant for pollinator visitation, including vertebrates such as Phelsuma geckos. The nectar is initially acidic and pale yellow, but slowly becomes alkaline before turning into red within 24 hours. Together with NEC1 and NEC3, facilitates the condensation of sinapaldehyde ((E)-3,5-dimethoxy-4-hydroxycinnamaldehyde) and proline to form nesocodin, a pigment with a stable imine bond. Protects nesocodin from degradation by hydrogen peroxide H(2)O(2) by catalyzing the degradation of H(2)O(2) into water H(2)O and dioxygene O(2). This is Ferritin-like catalase Nec2 from Nesocodon mauritianus (Blue Mauritius bellflower).